The following is a 455-amino-acid chain: 3-isopropylmalate dehydratase large subunit (455 aa).

Positions 337, 397, and 400 each coordinate [4Fe-4S] cluster.

The protein belongs to the aconitase/IPM isomerase family. LeuC type 1 subfamily. In terms of assembly, heterodimer of LeuC and LeuD. [4Fe-4S] cluster serves as cofactor.

The enzyme catalyses (2R,3S)-3-isopropylmalate = (2S)-2-isopropylmalate. Its pathway is amino-acid biosynthesis; L-leucine biosynthesis; L-leucine from 3-methyl-2-oxobutanoate: step 2/4. Functionally, catalyzes the isomerization between 2-isopropylmalate and 3-isopropylmalate, via the formation of 2-isopropylmaleate. This chain is 3-isopropylmalate dehydratase large subunit, found in Leuconostoc citreum (strain KM20).